A 224-amino-acid polypeptide reads, in one-letter code: Cutinase 1 (224 aa).

Positions 1–16 (MKFLSVLSLAITLAAA) are cleaved as a signal peptide. A disulfide bridge connects residues C46 and C125. S136 serves as the catalytic Nucleophile. The cysteines at positions 187 and 194 are disulfide-linked. The active site involves D191. H204 functions as the Proton donor/acceptor in the catalytic mechanism.

This sequence belongs to the cutinase family. In terms of processing, the 2 disulfide bonds play a critical role in holding the catalytic residues in juxta-position; reduction of the disulfide bridges results in the complete inactivation of the enzyme. The N-terminus is blocked.

It localises to the secreted. It catalyses the reaction cutin + H2O = cutin monomers.. Inhibited by diisopropyl fluorophosphate (DFP). Its function is as follows. Catalyzes the hydrolysis of complex carboxylic polyesters found in the cell wall of plants. Degrades cutin, a macromolecule that forms the structure of the plant cuticle. Allows pathogenic fungi to penetrate through the cuticular barrier into the host plant during the initial stage of fungal infection. This chain is Cutinase 1 (CUTA), found in Colletotrichum gloeosporioides (Anthracnose fungus).